The primary structure comprises 305 residues: MRIVFMGTPGFAEVILRALIENQNNNIEVVGLFTQMDKPFGRKKELKAPETKTYILENHSNIPIFQPQSLKEPEVQILKGLKPDFIVVVAYGKILPKEVLKIAPCINVHASLLPKYRGASPVHEMILNDDTIYGVSAMLMDLELDSGDILGSASFLREGYLNLETLSLKLAHMGATLLLSTLKNFHSITPKPQDHASATFCKKITKADGLVGFKDAKSLFLKSLAFKTWPEIFLENNLKLLGVELVENEKSHREGEILRIDERGVLVGCLKGSVRIARLQAVGKKPLKAKDYLNGRRLKAGDILA.

Residue 111–114 coordinates (6S)-5,6,7,8-tetrahydrofolate; sequence SLLP.

It belongs to the Fmt family.

It carries out the reaction L-methionyl-tRNA(fMet) + (6R)-10-formyltetrahydrofolate = N-formyl-L-methionyl-tRNA(fMet) + (6S)-5,6,7,8-tetrahydrofolate + H(+). Functionally, attaches a formyl group to the free amino group of methionyl-tRNA(fMet). The formyl group appears to play a dual role in the initiator identity of N-formylmethionyl-tRNA by promoting its recognition by IF2 and preventing the misappropriation of this tRNA by the elongation apparatus. The protein is Methionyl-tRNA formyltransferase of Helicobacter acinonychis (strain Sheeba).